Here is a 203-residue protein sequence, read N- to C-terminus: Glycerol-3-phosphate acyltransferase (203 aa).

The next 4 helical transmembrane spans lie at 4–24 (LTFAMSGIAYLLGSVSNAVLI), 68–88 (IPVYLAWYLGIPPLYLGFIGI), 104–124 (GGKGVATALGALLPLGLDMGS), and 125–145 (FMIVTWLIVLLFTGYSSLAAI).

Belongs to the PlsY family. In terms of assembly, probably interacts with PlsX.

It is found in the cell inner membrane. It catalyses the reaction an acyl phosphate + sn-glycerol 3-phosphate = a 1-acyl-sn-glycero-3-phosphate + phosphate. The protein operates within lipid metabolism; phospholipid metabolism. In terms of biological role, catalyzes the transfer of an acyl group from acyl-phosphate (acyl-PO(4)) to glycerol-3-phosphate (G3P) to form lysophosphatidic acid (LPA). This enzyme utilizes acyl-phosphate as fatty acyl donor, but not acyl-CoA or acyl-ACP. The sequence is that of Glycerol-3-phosphate acyltransferase from Tolumonas auensis (strain DSM 9187 / NBRC 110442 / TA 4).